The chain runs to 373 residues: Flap endonuclease 1 (373 aa).

The segment at 1 to 105 (MGIKGLNALI…GELEKRLKRR (105 aa)) is N-domain. A Mg(2+)-binding site is contributed by aspartate 34. DNA contacts are provided by arginine 47 and arginine 71. Mg(2+)-binding residues include aspartate 87, glutamate 159, glutamate 161, aspartate 180, and aspartate 182. The tract at residues 123 to 254 (DIAKFERRTV…VTAFKLIKEH (132 aa)) is I-domain. Position 159 (glutamate 159) interacts with DNA. Glycine 232 and aspartate 234 together coordinate DNA. Aspartate 234 provides a ligand contact to Mg(2+). An interaction with PCNA region spans residues 340 to 348 (TQGRLDKFF). The tract at residues 347–373 (FFVVKKRPAEEKKGKNTKEEKPKKKRK) is disordered.

This sequence belongs to the XPG/RAD2 endonuclease family. FEN1 subfamily. Interacts with PCNA. Three molecules of FEN1 bind to one PCNA trimer with each molecule binding to one PCNA monomer. PCNA stimulates the nuclease activity without altering cleavage specificity. The cofactor is Mg(2+). Post-translationally, phosphorylated. Phosphorylation upon DNA damage induces relocalization to the nuclear plasma.

Its subcellular location is the nucleus. It is found in the nucleolus. The protein localises to the nucleoplasm. The protein resides in the mitochondrion. Functionally, structure-specific nuclease with 5'-flap endonuclease and 5'-3' exonuclease activities involved in DNA replication and repair. During DNA replication, cleaves the 5'-overhanging flap structure that is generated by displacement synthesis when DNA polymerase encounters the 5'-end of a downstream Okazaki fragment. It enters the flap from the 5'-end and then tracks to cleave the flap base, leaving a nick for ligation. Also involved in the long patch base excision repair (LP-BER) pathway, by cleaving within the apurinic/apyrimidinic (AP) site-terminated flap. Acts as a genome stabilization factor that prevents flaps from equilibrating into structures that lead to duplications and deletions. Also possesses 5'-3' exonuclease activity on nicked or gapped double-stranded DNA, and exhibits RNase H activity. Also involved in replication and repair of rDNA and in repairing mitochondrial DNA. This chain is Flap endonuclease 1, found in Komagataella phaffii (strain GS115 / ATCC 20864) (Yeast).